A 497-amino-acid polypeptide reads, in one-letter code: Actin-binding protein WASF2 (497 aa).

Disordered regions lie at residues 173 to 203 and 239 to 436; these read KEKR…KEEW and ENVD…SDAR. Residues 252–263 show a composition bias toward low complexity; the sequence is SDSASSPSPSFS. Composition is skewed to pro residues over residues 298 to 335 and 343 to 403; these read SHPP…PPLP and GTPP…PPLP. Residues 435 to 452 enclose the WH2 domain; sequence ARSDLLSAIRQGFQLRRV. A Phosphoserine modification is found at serine 473.

This sequence belongs to the SCAR/WAVE family. Binds actin and the Arp2/3 complex. Interacts with BAIAP2. Component of the WAVE2 complex composed of ABI1, CYFIP1/SRA1, NCKAP1/NAP1 (NCKAP1l/HEM1 in hematopoietic cells) and WASF2/WAVE2. Directly interacts with BRK1. Interacts with human cytomegalovirus protein UL135. Interacts with FNBP1L (via the SH3 domain).

The protein resides in the cytoplasm. Its subcellular location is the cytoskeleton. It is found in the cell projection. It localises to the lamellipodium. The protein localises to the basolateral cell membrane. Its function is as follows. Downstream effector molecule involved in the transmission of signals from tyrosine kinase receptors and small GTPases to the actin cytoskeleton. Promotes formation of actin filaments. Part of the WAVE complex that regulates lamellipodia formation. The WAVE complex regulates actin filament reorganization via its interaction with the Arp2/3 complex. In Mus musculus (Mouse), this protein is Actin-binding protein WASF2.